An 860-amino-acid chain; its full sequence is Alanine--tRNA ligase (860 aa).

Zn(2+)-binding residues include His-553, His-557, Cys-655, and His-659.

This sequence belongs to the class-II aminoacyl-tRNA synthetase family. The cofactor is Zn(2+).

The protein localises to the cytoplasm. It carries out the reaction tRNA(Ala) + L-alanine + ATP = L-alanyl-tRNA(Ala) + AMP + diphosphate. Functionally, catalyzes the attachment of alanine to tRNA(Ala) in a two-step reaction: alanine is first activated by ATP to form Ala-AMP and then transferred to the acceptor end of tRNA(Ala). Also edits incorrectly charged Ser-tRNA(Ala) and Gly-tRNA(Ala) via its editing domain. In Legionella pneumophila (strain Corby), this protein is Alanine--tRNA ligase.